The sequence spans 419 residues: MCNRIISLFLLLFTGQVIALDLELTQGINSALPIAINSFGSDAAAQEIGNVIENDLTISGQFKIISGPQGANSQSSVSTLRQLGADSVVTGRVNQVGNRIEVSFTLADAVANGNILLTKTFQINANQVRALAHHISDEVYQKLTGERGIFSTRIAYISVQRNGGRSRYSLEVADADGHNPQSLLVSSEPIMSPSWSPNGKSISYVSFEKKKAEIFTVSVETGQRRLITSFPGINGAPAWSPDGRHLAVVLSKSGTPKIYDVDLSSGSMKQLTFGNSIDTEPRYSPDGRSLLFTSGRGGSPQVYRLSLADGQISRVTFEGNYNARASYTPDMKHIVMLHREDRQFNIGVQNTGGGPISNLTFSGLDESPSVSPNSRLVLYATRYQDRGVLGIVSIDGRIRMRLPAREGDVQEPAWSPYLS.

Residues 1 to 19 (MCNRIISLFLLLFTGQVIA) form the signal peptide.

Belongs to the TolB family. The Tol-Pal system is composed of five core proteins: the inner membrane proteins TolA, TolQ and TolR, the periplasmic protein TolB and the outer membrane protein Pal. They form a network linking the inner and outer membranes and the peptidoglycan layer.

It localises to the periplasm. Part of the Tol-Pal system, which plays a role in outer membrane invagination during cell division and is important for maintaining outer membrane integrity. The protein is Tol-Pal system protein TolB of Legionella pneumophila (strain Paris).